A 469-amino-acid polypeptide reads, in one-letter code: Cysteine protease ATG4D (469 aa).

Residues 1–29 (MNSVSPLATQYGSPKGSQQMENRSTQSGG) show a composition bias toward polar residues. A disordered region spans residues 1–41 (MNSVSPLATQYGSPKGSQQMENRSTQSGGHEQRKMGHQDAT). Catalysis depends on cysteine 131, which acts as the Nucleophile. The disordered stretch occupies residues 169-191 (IRSSSPPSMPLSSLATGHSAGDY). Residues 171 to 182 (SSSPPSMPLSSL) show a composition bias toward low complexity. Residues aspartate 356 and histidine 358 contribute to the active site. Residues 436-469 (QEYAEGPQSSSHPPVCRKKGPLVKRPSSDEFEFL) form a disordered region.

The protein belongs to the peptidase C54 family.

Its subcellular location is the cytoplasm. The enzyme catalyses [protein]-C-terminal L-amino acid-glycyl-phosphatidylethanolamide + H2O = [protein]-C-terminal L-amino acid-glycine + a 1,2-diacyl-sn-glycero-3-phosphoethanolamine. It catalyses the reaction [protein]-C-terminal L-amino acid-glycyl-phosphatidylserine + H2O = [protein]-C-terminal L-amino acid-glycine + a 1,2-diacyl-sn-glycero-3-phospho-L-serine. Its function is as follows. Cysteine protease that plays a key role in autophagy by mediating both proteolytic activation and delipidation of ATG8 family proteins. The protease activity is required for proteolytic activation of ATG8 family proteins to reveal a C-terminal glycine. Exposure of the glycine at the C-terminus is essential for ATG8 proteins conjugation to phosphatidylethanolamine (PE) and insertion to membranes, which is necessary for autophagy. In addition to the protease activity, also mediates delipidation of ATG8 family proteins. Catalyzes delipidation of PE-conjugated forms of ATG8 proteins during macroautophagy. Also involved in non-canonical autophagy, a parallel pathway involving conjugation of ATG8 proteins to single membranes at endolysosomal compartments, by catalyzing delipidation of ATG8 proteins conjugated to phosphatidylserine (PS). In Xenopus laevis (African clawed frog), this protein is Cysteine protease ATG4D.